The chain runs to 514 residues: Threonine synthase (514 aa).

Residue K117 is modified to N6-(pyridoxal phosphate)lysine. Positions 270, 271, 272, and 274 each coordinate pyridoxal 5'-phosphate. Residues S319 and S321 each carry the phosphoserine modification. Residue T449 coordinates pyridoxal 5'-phosphate.

The protein belongs to the threonine synthase family. Pyridoxal 5'-phosphate is required as a cofactor.

The catalysed reaction is O-phospho-L-homoserine + H2O = L-threonine + phosphate. The protein operates within amino-acid biosynthesis; L-threonine biosynthesis; L-threonine from L-aspartate: step 5/5. Functionally, catalyzes the gamma-elimination of phosphate from L-phosphohomoserine and the beta-addition of water to produce L-threonine. This chain is Threonine synthase (thrc), found in Schizosaccharomyces pombe (strain 972 / ATCC 24843) (Fission yeast).